The sequence spans 336 residues: DNA-directed RNA polymerase subunit alpha (336 aa).

The interval 1–232 (MIQKNWQELI…DQLGVFVNFD (232 aa)) is alpha N-terminal domain (alpha-NTD). Positions 248–336 (FNPALLKKVD…DLAKRYEDQY (89 aa)) are alpha C-terminal domain (alpha-CTD).

Belongs to the RNA polymerase alpha chain family. Homodimer. The RNAP catalytic core consists of 2 alpha, 1 beta, 1 beta' and 1 omega subunit. When a sigma factor is associated with the core the holoenzyme is formed, which can initiate transcription.

It carries out the reaction RNA(n) + a ribonucleoside 5'-triphosphate = RNA(n+1) + diphosphate. Its function is as follows. DNA-dependent RNA polymerase catalyzes the transcription of DNA into RNA using the four ribonucleoside triphosphates as substrates. The polypeptide is DNA-directed RNA polymerase subunit alpha (Rhizobium etli (strain CIAT 652)).